Reading from the N-terminus, the 293-residue chain is MAVVHAEGNVWIKQWDHRFHMYGGQTCSPLMAGSWDDRTPLHDAALQGRLLPLRRLLSQGYNVGMATLDGITALHEACVGGHFTCAKLLLEHGADANAVTFDGATPLFSACCSGNPALVSLILTHSSAHHPAHLLCSPLHEAAKRGHTACVELLLSHGVNVDMELPSVGTALYCACEVKSTDCVLTLLILGADVQCGRGLDTPLHAACRVGGAKEAELLLEHGADRTSRNSEGKTPLDLTSDQSIKHLLQTAGTCSLSQLCRWCIRRSLGQKGLNKTKTLCLPHMLHNYLLYH.

ANK repeat units lie at residues 36 to 65 (DDRT…NVGM), 69 to 98 (DGIT…DANA), 102 to 131 (DGAT…AHHP), 134 to 163 (LLCS…NVDM), 167 to 196 (SVGT…DVQC), 199 to 228 (GLDT…DRTS), and 232 to 259 (EGKT…SLSQ). The 50-residue stretch at 244–293 (SIKHLLQTAGTCSLSQLCRWCIRRSLGQKGLNKTKTLCLPHMLHNYLLYH) folds into the SOCS box domain.

This sequence belongs to the ankyrin SOCS box (ASB) family. As to quaternary structure, substrate-recognition component of the ECS(ASB11) complex, composed of asb11, cul5, elob, eloc and rnf7/rbx2. As to expression, expressed in the developing nervous system: localizes to neural plate margins and is abutting the proneuronal zone.

It is found in the endoplasmic reticulum. It functions in the pathway protein modification; protein ubiquitination. Functionally, substrate-recognition component of a cullin-5-RING E3 ubiquitin-protein ligase complex (ECS complex, also named CRL5 complex), which mediates the ubiquitination and subsequent proteasomal degradation of target proteins. Acts as a regulator of the neuronal progenitor compartment size by maintaining the neural precursors in the proliferating undifferentiated state. The ECS(ASB11) complex acts as a positive regulator of Notch signaling pathway by mediating ubiquitination and degradation of DeltaA (dla). Also acts as a regulator of regenerative myogenesis. This Danio rerio (Zebrafish) protein is Ankyrin repeat and SOCS box protein 11.